The primary structure comprises 462 residues: Hemopexin (462 aa).

The signal sequence occupies residues 1–23 (MARVLGAPVALGLWSLCWSLAIA). Residues Thr24 and Thr29 are each glycosylated (O-linked (GalNAc...) threonine). Residues 29-48 (TSAHGNVAEGETKPDPDVTE) are disordered. The tract at residues 30-40 (SAHGNVAEGET) is O-glycosylated at one site. The span at 38 to 48 (GETKPDPDVTE) shows a compositional bias: basic and acidic residues. Intrachain disulfides connect Cys50–Cys231, Cys149–Cys154, and Cys188–Cys200. Hemopexin repeat units lie at residues 53-93 (GWSF…WKNF), 94-139 (PSPV…FPGI), 140-184 (PSPL…SWPA), and 185-231 (VGNC…FMPC). A glycan (N-linked (GlcNAc...) (complex) asparagine) is linked at Asn64. A heme-binding site is contributed by His79. His150 serves as a coordination point for heme. Asn187 carries N-linked (GlcNAc...) (complex) asparagine glycosylation. His236 is a binding site for heme. N-linked (GlcNAc...) asparagine glycans are attached at residues Asn240 and Asn246. 3 cysteine pairs are disulfide-bonded: Cys257–Cys460, Cys366–Cys408, and Cys418–Cys435. Hemopexin repeat units follow at residues 259-304 (PHLV…WPQG), 305-352 (PSAV…VGTP), 357-396 (LDSV…WTEL), and 400-450 (HEKV…ALPQ). His293 contributes to the heme binding site. Asn453 carries an N-linked (GlcNAc...) (complex) asparagine glycan.

It belongs to the hemopexin family. In terms of assembly, interacts with FLVCR1. (Microbial infection) Interacts with hepatitis E virus/HEV protein ORF3. In terms of processing, N- and O-glycosylated. O-glycosylated with core 1 or possibly core 8 glycans. O-glycosylation in the 30-40 region is minor compared to glycosylation at Thr-24 and Thr-29. Expressed by the liver and secreted in plasma.

Its subcellular location is the secreted. In terms of biological role, binds heme and transports it to the liver for breakdown and iron recovery, after which the free hemopexin returns to the circulation. This Homo sapiens (Human) protein is Hemopexin (HPX).